An 85-amino-acid polypeptide reads, in one-letter code: Protein C4 (85 aa).

The N-myristoyl glycine; by host moiety is linked to residue Gly-2. Residues 42-65 (LNPAPTSSPTSTRTETQLNGGNSR) are disordered. Over residues 44–57 (PAPTSSPTSTRTET) the composition is skewed to low complexity.

The protein belongs to the geminiviridae protein AC4/C4 family. As to quaternary structure, interacts with Arabidopsis thaliana RCH2, ASK7/ASK-eta and ASK6/ASK-zeta. Phosphorylated by Arabidopsis thaliana ASK7/ASK-eta mainly on threonine and serine residues. In terms of tissue distribution, expressed in vascular tissues, and especially in phloem cells.

The protein localises to the host cell membrane. In terms of biological role, major determinant of pathogenesis that affects the hyperplastic response of the host to viral infection. Mediates the induction of cell division in permissive cells, mainly in phloem. May act as a suppressor of RNA-mediated gene silencing, also known as post-transcriptional gene silencing (PTGS), a mechanism of plant viral defense that limits the accumulation of viral RNAs. This chain is Protein C4, found in Beet curly top virus (strain California/Logan) (BCTV).